A 356-amino-acid polypeptide reads, in one-letter code: Phosphoribosyl pyrophosphate synthase-associated protein 1 (356 aa).

Methionine 1 is subject to N-acetylmethionine. Phosphoserine occurs at positions 177 and 215.

The protein belongs to the ribose-phosphate pyrophosphokinase family. Binds to PRPS1 and PRPS2. As to expression, ubiquitous.

Seems to play a negative regulatory role in 5-phosphoribose 1-diphosphate synthesis. This is Phosphoribosyl pyrophosphate synthase-associated protein 1 (Prpsap1) from Rattus norvegicus (Rat).